Consider the following 645-residue polypeptide: Threonine--tRNA ligase (645 aa).

Residues 1-61 enclose the TGS domain; that stretch reads MIKITLPDGS…TSDSTVQLLT (61 aa). Positions 242–541 are catalytic; the sequence is DHRKLGKELE…LIEHVAGNFP (300 aa). Zn(2+) is bound by residues Cys337, His388, and His518.

Belongs to the class-II aminoacyl-tRNA synthetase family. Homodimer. Zn(2+) is required as a cofactor.

Its subcellular location is the cytoplasm. The enzyme catalyses tRNA(Thr) + L-threonine + ATP = L-threonyl-tRNA(Thr) + AMP + diphosphate + H(+). In terms of biological role, catalyzes the attachment of threonine to tRNA(Thr) in a two-step reaction: L-threonine is first activated by ATP to form Thr-AMP and then transferred to the acceptor end of tRNA(Thr). Also edits incorrectly charged L-seryl-tRNA(Thr). In Cytophaga hutchinsonii (strain ATCC 33406 / DSM 1761 / CIP 103989 / NBRC 15051 / NCIMB 9469 / D465), this protein is Threonine--tRNA ligase.